Here is a 101-residue protein sequence, read N- to C-terminus: uncharacterized protein (101 aa).

The first 19 residues, 1–19, serve as a signal peptide directing secretion; the sequence is MKFKYLSTPLLFSALLFSA. Cys-20 carries N-palmitoyl cysteine lipidation. Cys-20 is lipidated: S-diacylglycerol cysteine.

Belongs to the MG439/MG440 family.

The protein resides in the cell membrane. This is an uncharacterized protein from Mycoplasma pneumoniae (strain ATCC 29342 / M129 / Subtype 1) (Mycoplasmoides pneumoniae).